Reading from the N-terminus, the 610-residue chain is Protein arginine N-methyltransferase 5 (610 aa).

Residues 284–587 (LEIPLQPLCD…VDATKVWYEW (304 aa)) enclose the SAM-dependent MTase PRMT-type domain. Residue Tyr-300 participates in S-adenosyl-L-methionine binding. Residue Phe-303 participates in a protein binding. Residues 309 to 310 (KY), Glu-368, and 396 to 397 (DM) contribute to the S-adenosyl-L-methionine site. 2 residues coordinate a protein: Glu-412 and Glu-421. Catalysis depends on proton donor/acceptor residues Glu-412 and Glu-421. Residues 470 to 610 (AFDYGYVSLL…TRGTGYNMRL (141 aa)) form an interaction with vls region.

It belongs to the class I-like SAM-binding methyltransferase superfamily. Protein arginine N-methyltransferase family. As to quaternary structure, interacts with vls. In terms of tissue distribution, expressed only in ovaries.

The protein resides in the cytoplasm. Arginine methyltransferase that can both catalyze the formation of omega-N monomethylarginine (MMA) and symmetrical dimethylarginine (sDMA). Specifically mediates the symmetrical dimethylation of arginine residues in the small nuclear ribonucleoproteins SmD1 and SmD3. Required for arginine symmetrical dimethylation of piwi family proteins, piwi, aub and AGO3, during germline development. Required during oogenesis for pole cell formation in the pathway controlled by oskar (osk) and for abdominal segments during early embryogenesis. Involved in nanos (nos) and germ cell mRNAs localization. The sequence is that of Protein arginine N-methyltransferase 5 from Drosophila melanogaster (Fruit fly).